Here is a 137-residue protein sequence, read N- to C-terminus: Large-conductance mechanosensitive channel (137 aa).

The next 2 helical transmembrane spans lie at 14 to 34 (VLDL…INSL) and 81 to 101 (GSFL…FLIV).

Belongs to the MscL family. As to quaternary structure, homopentamer.

The protein resides in the cell membrane. Its function is as follows. Channel that opens in response to stretch forces in the membrane lipid bilayer. May participate in the regulation of osmotic pressure changes within the cell. This chain is Large-conductance mechanosensitive channel, found in Chloroflexus aggregans (strain MD-66 / DSM 9485).